A 541-amino-acid chain; its full sequence is ATP synthase subunit beta (541 aa).

Residues 1–65 (MAKAVTSSKG…TPVKKEERAK (65 aa)) form a disordered region. Basic and acidic residues-rich tracts occupy residues 25-36 (VKKDASKSKDAS) and 52-65 (AAKD…ERAK). 214 to 221 (GGAGVGKT) provides a ligand contact to ATP.

It belongs to the ATPase alpha/beta chains family. F-type ATPases have 2 components, CF(1) - the catalytic core - and CF(0) - the membrane proton channel. CF(1) has five subunits: alpha(3), beta(3), gamma(1), delta(1), epsilon(1). CF(0) has three main subunits: a(1), b(2) and c(9-12). The alpha and beta chains form an alternating ring which encloses part of the gamma chain. CF(1) is attached to CF(0) by a central stalk formed by the gamma and epsilon chains, while a peripheral stalk is formed by the delta and b chains.

It localises to the cell inner membrane. It carries out the reaction ATP + H2O + 4 H(+)(in) = ADP + phosphate + 5 H(+)(out). Functionally, produces ATP from ADP in the presence of a proton gradient across the membrane. The catalytic sites are hosted primarily by the beta subunits. This Bartonella tribocorum (strain CIP 105476 / IBS 506) protein is ATP synthase subunit beta.